The primary structure comprises 436 residues: Glutamate-1-semialdehyde 2,1-aminomutase (436 aa).

At Lys-269 the chain carries N6-(pyridoxal phosphate)lysine.

This sequence belongs to the class-III pyridoxal-phosphate-dependent aminotransferase family. HemL subfamily. As to quaternary structure, homodimer. Requires pyridoxal 5'-phosphate as cofactor.

The protein localises to the cytoplasm. It carries out the reaction (S)-4-amino-5-oxopentanoate = 5-aminolevulinate. It participates in porphyrin-containing compound metabolism; protoporphyrin-IX biosynthesis; 5-aminolevulinate from L-glutamyl-tRNA(Glu): step 2/2. The protein operates within porphyrin-containing compound metabolism; chlorophyll biosynthesis. This is Glutamate-1-semialdehyde 2,1-aminomutase from Heliobacterium modesticaldum (strain ATCC 51547 / Ice1).